The primary structure comprises 788 residues: Endonuclease MutS2 (788 aa).

332-339 is a binding site for ATP; sequence GPNTGGKT. The region spanning 713 to 788 is the Smr domain; sequence VDLRGMDAEE…GTGVTVVELK (76 aa).

Belongs to the DNA mismatch repair MutS family. MutS2 subfamily. As to quaternary structure, homodimer. Binds to stalled ribosomes, contacting rRNA.

Functionally, endonuclease that is involved in the suppression of homologous recombination and thus may have a key role in the control of bacterial genetic diversity. Its function is as follows. Acts as a ribosome collision sensor, splitting the ribosome into its 2 subunits. Detects stalled/collided 70S ribosomes which it binds and splits by an ATP-hydrolysis driven conformational change. Acts upstream of the ribosome quality control system (RQC), a ribosome-associated complex that mediates the extraction of incompletely synthesized nascent chains from stalled ribosomes and their subsequent degradation. Probably generates substrates for RQC. This is Endonuclease MutS2 from Clostridium botulinum (strain Kyoto / Type A2).